A 349-amino-acid chain; its full sequence is Ureidoglycolate dehydrogenase (NAD(+)) (349 aa).

His-116 acts as the Proton acceptor in catalysis. Residues Ser-140, 174 to 176 (DMA), Lys-224, and 306 to 308 (GQD) each bind NAD(+).

The protein belongs to the LDH2/MDH2 oxidoreductase family. In terms of assembly, homodimer.

The protein resides in the cytoplasm. The enzyme catalyses (S)-ureidoglycolate + NAD(+) = N-carbamoyl-2-oxoglycine + NADH + H(+). It participates in nitrogen metabolism; (S)-allantoin degradation; oxalurate from (S)-ureidoglycolate: step 1/1. In terms of biological role, allD plays a pivotal role as a metabolic branch-point enzyme in nitrogen utilization via the assimilation of allantoin. It is able to utilize allantoin as a sole source of nitrogen under anaerobic conditions. Catalyzes the oxidation of ureidoglycolate to oxalurate. This Escherichia coli O157:H7 protein is Ureidoglycolate dehydrogenase (NAD(+)).